We begin with the raw amino-acid sequence, 225 residues long: Biosynthetic peptidoglycan transglycosylase (225 aa).

The chain crosses the membrane as a helical span at residues 8-28 (VLLIFIGAILFIQLWIFSSLV).

The protein belongs to the glycosyltransferase 51 family.

It localises to the cell inner membrane. It carries out the reaction [GlcNAc-(1-&gt;4)-Mur2Ac(oyl-L-Ala-gamma-D-Glu-L-Lys-D-Ala-D-Ala)](n)-di-trans,octa-cis-undecaprenyl diphosphate + beta-D-GlcNAc-(1-&gt;4)-Mur2Ac(oyl-L-Ala-gamma-D-Glu-L-Lys-D-Ala-D-Ala)-di-trans,octa-cis-undecaprenyl diphosphate = [GlcNAc-(1-&gt;4)-Mur2Ac(oyl-L-Ala-gamma-D-Glu-L-Lys-D-Ala-D-Ala)](n+1)-di-trans,octa-cis-undecaprenyl diphosphate + di-trans,octa-cis-undecaprenyl diphosphate + H(+). It functions in the pathway cell wall biogenesis; peptidoglycan biosynthesis. Its function is as follows. Peptidoglycan polymerase that catalyzes glycan chain elongation from lipid-linked precursors. The sequence is that of Biosynthetic peptidoglycan transglycosylase from Acinetobacter baumannii (strain ATCC 17978 / DSM 105126 / CIP 53.77 / LMG 1025 / NCDC KC755 / 5377).